We begin with the raw amino-acid sequence, 379 residues long: Neutral protease 2 homolog TRV_03208 (379 aa).

The signal sequence occupies residues Met1–Ala19. Positions Leu20–Arg187 are excised as a propeptide. Cystine bridges form between Cys193–Cys263 and Cys270–Cys288. An N-linked (GlcNAc...) asparagine glycan is attached at Asn221. His312 provides a ligand contact to Zn(2+). Residue Glu313 is part of the active site. His316 and Asp327 together coordinate Zn(2+).

This sequence belongs to the peptidase M35 family. Zn(2+) serves as cofactor.

It is found in the secreted. The catalysed reaction is Preferential cleavage of bonds with hydrophobic residues in P1'. Also 3-Asn-|-Gln-4 and 8-Gly-|-Ser-9 bonds in insulin B chain.. Its function is as follows. Secreted metalloproteinase that allows assimilation of proteinaceous substrates. Shows high activities on basic nuclear substrates such as histone and protamine. May be involved in virulence. The polypeptide is Neutral protease 2 homolog TRV_03208 (Trichophyton verrucosum (strain HKI 0517)).